A 496-amino-acid polypeptide reads, in one-letter code: Glutamate--tRNA ligase (496 aa).

The short motif at 12–22 is the 'HIGH' region element; sequence PSPTGTPHVGL. A 'KMSKS' region motif is present at residues 256-260; it reads KLSKR. K259 contributes to the ATP binding site.

It belongs to the class-I aminoacyl-tRNA synthetase family. Glutamate--tRNA ligase type 1 subfamily. In terms of assembly, monomer.

It is found in the cytoplasm. It carries out the reaction tRNA(Glu) + L-glutamate + ATP = L-glutamyl-tRNA(Glu) + AMP + diphosphate. In terms of biological role, catalyzes the attachment of glutamate to tRNA(Glu) in a two-step reaction: glutamate is first activated by ATP to form Glu-AMP and then transferred to the acceptor end of tRNA(Glu). The chain is Glutamate--tRNA ligase from Mycobacteroides abscessus (strain ATCC 19977 / DSM 44196 / CCUG 20993 / CIP 104536 / JCM 13569 / NCTC 13031 / TMC 1543 / L948) (Mycobacterium abscessus).